A 224-amino-acid polypeptide reads, in one-letter code: Ankyrin repeat domain-containing protein 45 (224 aa).

2 ANK repeats span residues 46 to 76 (VGRN…DVNE) and 80 to 109 (RGYS…DFQA).

In terms of tissue distribution, widely expressed.

It is found in the cytoplasm. The protein localises to the midbody. Its subcellular location is the midbody ring. It localises to the cleavage furrow. Its function is as follows. May play a role during cell division. This Danio rerio (Zebrafish) protein is Ankyrin repeat domain-containing protein 45.